Reading from the N-terminus, the 115-residue chain is MDRNEIFEKIMRLEMNVNQLSKETSELKAHAVELVEENVALQLENDNLKKVLGNDEPTTIDTANSKPAKAVKKPLPSKDNLAILYGEGFHICKGELFGKHRHGEDCLFCLEVLSD.

4 residues coordinate Zn(2+): His-90, Cys-92, Cys-106, and Cys-109.

It belongs to the YabA family. As to quaternary structure, homotetramer. Interacts with both DnaA and DnaN, acting as a bridge between these two proteins. It depends on Zn(2+) as a cofactor.

The protein localises to the cytoplasm. Its subcellular location is the nucleoid. Its function is as follows. Involved in control of chromosome replication initiation. Inhibits the cooperative binding of DnaA to the oriC region, thus negatively regulating initiation of chromosome replication. Inhibits the ability of DnaA-ATP to form a helix on DNA; does not disassemble preformed DnaA-DNA helices. Decreases the residence time of DnaA on the chromosome at its binding sites (oriC, replication forks and promoter-binding sites). Tethers DnaA to the replication machinery via the DNA polymerase beta sliding clamp subunit (dnaN). Associates with oriC and other DnaA targets on the chromosome in a DnaA-dependent manner. This chain is Replication initiation control protein YabA, found in Staphylococcus aureus (strain JH1).